Here is a 149-residue protein sequence, read N- to C-terminus: MSITVNKKAFHDYFVEEKYEAGISLEGWEVKAIRAGRMNIKESYVIIKGGELFLIGMHISPLATASTHVSHDPTRTRKLLLHAKEISKLIGKVERAGYALVPLDLHFVRGRIKLEIGLAKGKKQHDKRADELDKDSKREAQRAMKERQR.

Residues G121–R149 are disordered. The segment covering K127–R149 has biased composition (basic and acidic residues).

It belongs to the SmpB family.

Its subcellular location is the cytoplasm. In terms of biological role, required for rescue of stalled ribosomes mediated by trans-translation. Binds to transfer-messenger RNA (tmRNA), required for stable association of tmRNA with ribosomes. tmRNA and SmpB together mimic tRNA shape, replacing the anticodon stem-loop with SmpB. tmRNA is encoded by the ssrA gene; the 2 termini fold to resemble tRNA(Ala) and it encodes a 'tag peptide', a short internal open reading frame. During trans-translation Ala-aminoacylated tmRNA acts like a tRNA, entering the A-site of stalled ribosomes, displacing the stalled mRNA. The ribosome then switches to translate the ORF on the tmRNA; the nascent peptide is terminated with the 'tag peptide' encoded by the tmRNA and targeted for degradation. The ribosome is freed to recommence translation, which seems to be the essential function of trans-translation. This Dechloromonas aromatica (strain RCB) protein is SsrA-binding protein.